The sequence spans 181 residues: UPF0316 protein Bcer98_2136 (181 aa).

Transmembrane regions (helical) follow at residues 6 to 26 (LIFV…ILLV), 32 to 52 (SAAG…GIVF), and 58 to 78 (WMNI…GGYI).

The protein belongs to the UPF0316 family.

Its subcellular location is the cell membrane. This is UPF0316 protein Bcer98_2136 from Bacillus cytotoxicus (strain DSM 22905 / CIP 110041 / 391-98 / NVH 391-98).